Reading from the N-terminus, the 301-residue chain is rRNA methyltransferase 1, mitochondrial (301 aa).

The N-terminal 11 residues, 1 to 11 (MIRSRVNLARE), are a transit peptide targeting the mitochondrion. A disordered region spans residues 121-141 (YNNKNGQDSPHNDLNEGKSSS).

The protein belongs to the class IV-like SAM-binding methyltransferase superfamily. RNA methyltransferase TrmH family.

It is found in the mitochondrion. The enzyme catalyses a guanosine in 21S rRNA + S-adenosyl-L-methionine = a 2'-O-methylguanosine in 21S rRNA + S-adenosyl-L-homocysteine + H(+). Functionally, S-adenosyl-L-methionine-dependent 2'-O-ribose methyltransferase that catalyzes the formation of the 2'-O-methylguanosine corresponding to position 2270 in S.cerevisiae 21S mitochondrial large subunit ribosomal RNA (mtLSU rRNA), a universally conserved modification in the peptidyl transferase domain of the mtLSU rRNA. The protein is rRNA methyltransferase 1, mitochondrial of Schizosaccharomyces pombe (strain 972 / ATCC 24843) (Fission yeast).